Here is a 538-residue protein sequence, read N- to C-terminus: Histone-arginine methyltransferase CARMER (538 aa).

Positions 148–457 (ASQYFQFYGY…QSYDVTIDLH (310 aa)) constitute an SAM-dependent MTase PRMT-type domain. The S-adenosyl-L-methionine site is built by Gln-161, Arg-170, Gly-194, Glu-216, Glu-245, and Thr-273. Arg-508 bears the Asymmetric dimethylarginine; by autocatalysis mark.

This sequence belongs to the class I-like SAM-binding methyltransferase superfamily. Protein arginine N-methyltransferase family. In terms of assembly, homodimer. Post-translationally, the dimethylated protein is the major form.

It localises to the cytoplasm. The protein localises to the nucleus. The catalysed reaction is L-arginyl-[protein] + 2 S-adenosyl-L-methionine = N(omega),N(omega)-dimethyl-L-arginyl-[protein] + 2 S-adenosyl-L-homocysteine + 2 H(+). Its function is as follows. Methylates (mono- and asymmetric dimethylation) the guanidino nitrogens of arginyl residues in proteins. May methylate histone H3 at 'Arg-17' and activate transcription via chromatin remodeling. This Drosophila virilis (Fruit fly) protein is Histone-arginine methyltransferase CARMER (Art4).